Consider the following 420-residue polypeptide: Transcription termination factor Rho (420 aa).

Residues 49–124 (DIFGGGVLEI…LKVDQVNDDK (76 aa)) form the Rho RNA-BD domain. Residues 170–175 (GKGQRG), 182–187 (KAGKTM), and arginine 213 each bind ATP.

It belongs to the Rho family. As to quaternary structure, homohexamer. The homohexamer assembles into an open ring structure.

In terms of biological role, facilitates transcription termination by a mechanism that involves Rho binding to the nascent RNA, activation of Rho's RNA-dependent ATPase activity, and release of the mRNA from the DNA template. This chain is Transcription termination factor Rho, found in Haemophilus influenzae (strain ATCC 51907 / DSM 11121 / KW20 / Rd).